The primary structure comprises 72 residues: QVFDQACKGVYDRAIFKKLDRVCDDCYNLYRKPYVATSCRQNCYSNLVFRQCLDDLLLVDVVDEYVSGVQIV.

Q1 bears the Pyrrolidone carboxylic acid mark. The residue at position 3 (F3) is a D-phenylalanine; in form CHHB-II. Cystine bridges form between C7-C43, C23-C39, and C26-C52. V72 is subject to Valine amide.

Post-translationally, stereoinversion of L-Phe (in CHHB-I) to D-Phe (in CHHB-II).

It localises to the secreted. Hormone found in the sinus gland of isopods and decapods which controls the blood sugar level. Has a secretagogue action over the amylase released from the midgut gland. May act as a stress hormone and may be involved in the control of molting and reproduction. This is Crustacean hyperglycemic hormone B from Cherax destructor (Common yabby crayfish).